We begin with the raw amino-acid sequence, 90 residues long: Small ribosomal subunit protein bS20 (90 aa).

Belongs to the bacterial ribosomal protein bS20 family.

Its function is as follows. Binds directly to 16S ribosomal RNA. This Desulfitobacterium hafniense (strain DSM 10664 / DCB-2) protein is Small ribosomal subunit protein bS20.